Consider the following 393-residue polypeptide: MGYYSLTEVTAVQYAKEHGYFEKKANVVCHEIGDGNLNYVFKLDDGEKSIIIKQALPYAKVVGESWPLSIKRATIESKALQIFAKYVPEYVPVVYSHDEELAVTIIEDLSKLTITRKGLIDGEEYPLLSQHIGRFLANVLFYTSDFGLQSEEKRVLEGTFVNPDLCKITEDLVFTDPFGHYDTNDYESELQLAVDELWSDKTLKLKVAQYKYKFLTRKEALIHGDLHTGSIFSSPSETKVIDPEFATYGPFGFDIGQFIANLLLNALSREEEQRSVLFFHIEKTWSYFVDTFTKLWIGEGVEAYTKEKQWLPIILQNIFTDVVGFAGCELIRRTIGLAHVADLDEIANKETRIQAKKQALSLGRELIKYESKNADIQLFRALFQQTVSGGVKA.

Residues Asn38, Lys53, and 107-109 each bind ATP; that span reads EDL. Position 225 (Asp225) interacts with substrate. 242-244 is a binding site for ATP; it reads DPE. Arg332 contacts substrate.

It belongs to the methylthioribose kinase family. Homodimer.

The catalysed reaction is 5-(methylsulfanyl)-D-ribose + ATP = 5-(methylsulfanyl)-alpha-D-ribose 1-phosphate + ADP + H(+). It participates in amino-acid biosynthesis; L-methionine biosynthesis via salvage pathway; S-methyl-5-thio-alpha-D-ribose 1-phosphate from S-methyl-5'-thioadenosine (hydrolase route): step 2/2. Its function is as follows. Catalyzes the phosphorylation of methylthioribose into methylthioribose-1-phosphate. This is Methylthioribose kinase from Bacillus cereus (strain AH187).